The following is a 103-amino-acid chain: Pro-corazonin (103 aa).

The signal sequence occupies residues 1 to 19 (MSANVTLLLIFVTLASVTA). Q20 is modified (pyrrolidone carboxylic acid). N30 carries the asparagine amide modification. Residues 34–103 (DQGHLRPELK…NLNAMMDAFY (70 aa)) constitute a propeptide that is removed on maturation.

As to expression, expressed in corpora cardiaca (CC), corpora allata (CA), antennal lobe (AL) and gnathal ganglion (GNG) (at protein level). Expression in CC and CA detected in all animals, expression in AL and in GNG in some animals.

Its subcellular location is the secreted. Cardioactive peptide. Corazonin is probably involved in the physiological regulation of the heart beat. The polypeptide is Pro-corazonin (Agrotis ipsilon (Black cutworm moth)).